A 241-amino-acid polypeptide reads, in one-letter code: Probable transcriptional regulatory protein PSHAb0060 (241 aa).

The protein belongs to the TACO1 family.

The protein localises to the cytoplasm. This is Probable transcriptional regulatory protein PSHAb0060 from Pseudoalteromonas translucida (strain TAC 125).